The sequence spans 824 residues: Leucine--tRNA ligase (824 aa).

The 'HIGH' region motif lies at 41-51 (PYPSGTLHVGH). The 'KMSKS' region motif lies at 580 to 584 (KMSKS). Residue K583 participates in ATP binding.

This sequence belongs to the class-I aminoacyl-tRNA synthetase family.

The protein localises to the cytoplasm. The catalysed reaction is tRNA(Leu) + L-leucine + ATP = L-leucyl-tRNA(Leu) + AMP + diphosphate. The protein is Leucine--tRNA ligase of Thermotoga petrophila (strain ATCC BAA-488 / DSM 13995 / JCM 10881 / RKU-1).